Reading from the N-terminus, the 197-residue chain is Mediator of RNA polymerase II transcription subunit 10 (197 aa).

The interval 1–39 is disordered; sequence MSSTAGTRRPRQITPTSPSPSPEPQPGATNGSSSTINVA. The segment covering 27–37 has biased composition (polar residues); it reads GATNGSSSTIN.

It belongs to the Mediator complex subunit 10 family. In terms of assembly, component of the Mediator complex.

It localises to the nucleus. In terms of biological role, component of the Mediator complex, a coactivator involved in the regulated transcription of nearly all RNA polymerase II-dependent genes. Mediator functions as a bridge to convey information from gene-specific regulatory proteins to the basal RNA polymerase II transcription machinery. Mediator is recruited to promoters by direct interactions with regulatory proteins and serves as a scaffold for the assembly of a functional preinitiation complex with RNA polymerase II and the general transcription factors. In Mycosarcoma maydis (Corn smut fungus), this protein is Mediator of RNA polymerase II transcription subunit 10 (NUT2).